The primary structure comprises 482 residues: Anaerobic nitric oxide reductase flavorubredoxin (482 aa).

Residues 30 to 210 (LRGSSYNSYL…PFSRLVTPKI (181 aa)) form a zinc metallo-hydrolase region. His-79, Glu-81, Asp-83, His-147, Asp-166, and His-227 together coordinate Fe cation. The region spanning 254-393 (ITIFYDTMSN…LCRQHGRDIA (140 aa)) is the Flavodoxin-like domain. FMN contacts are provided by residues 260–264 (TMSNN) and 342–369 (AFGSHGWSGGAVDRLSTRLQDAGFEMSL). The Rubredoxin-like domain maps to 426-477 (GPMMQCSVCQWVYDPAKGEPNQDVQPGTPWSEVPDNFLCPECSLGKDVFDVL). Residues Cys-431, Cys-434, Cys-464, and Cys-467 each coordinate Fe cation.

This sequence in the N-terminal section; belongs to the zinc metallo-hydrolase group 3 family. As to quaternary structure, homotetramer. It depends on Fe cation as a cofactor. FMN serves as cofactor.

It localises to the cytoplasm. Its pathway is nitrogen metabolism; nitric oxide reduction. Anaerobic nitric oxide reductase; uses NADH to detoxify nitric oxide (NO), protecting several 4Fe-4S NO-sensitive enzymes. Has at least 2 reductase partners, only one of which (NorW, flavorubredoxin reductase) has been identified. NO probably binds to the di-iron center; electrons enter from the NorW at rubredoxin and are transferred sequentially to the FMN center and the di-iron center. Also able to function as an aerobic oxygen reductase. The chain is Anaerobic nitric oxide reductase flavorubredoxin from Klebsiella pneumoniae subsp. pneumoniae (strain ATCC 700721 / MGH 78578).